The primary structure comprises 86 residues: YcgL domain-containing protein Smlt4554 (86 aa).

The 85-residue stretch at 1 to 85 folds into the YcgL domain; the sequence is MHAYVYKSQL…SVASLMPRHY (85 aa).

This Stenotrophomonas maltophilia (strain K279a) protein is YcgL domain-containing protein Smlt4554.